The sequence spans 257 residues: Homeobox protein EMX1 (257 aa).

Positions 159–218 (PKRIRTAFSPSQLLRLERAFEKNHYVVGAERKQLAGSLSLSETQVKVWFQNRRTKYKRQK) form a DNA-binding region, homeobox. The interval 216 to 257 (RQKLEEEGPESEQKKKGSHHINRWRIATKQANGEDIDVTSND) is disordered. The segment covering 217–230 (QKLEEEGPESEQKK) has biased composition (basic and acidic residues).

This sequence belongs to the EMX homeobox family. In terms of assembly, interacts with WRD11 (via the N-terminal and the central portion of the protein); the interaction associates EMX1 with GLI3. Cerebral cortex. Expressed in the olfactory bulbs.

Its subcellular location is the nucleus. Its function is as follows. Transcription factor, which in cooperation with EMX2, acts to generate the boundary between the roof and archipallium in the developing brain. May function in combinations with OTX1/2 to specify cell fates in the developing central nervous system. The sequence is that of Homeobox protein EMX1 (Emx1) from Mus musculus (Mouse).